The following is a 1252-amino-acid chain: DNA-directed RNA polymerase subunit beta (1252 aa).

It belongs to the RNA polymerase beta chain family. In terms of assembly, the RNAP catalytic core consists of 2 alpha, 1 beta, 1 beta' and 1 omega subunit. When a sigma factor is associated with the core the holoenzyme is formed, which can initiate transcription.

It catalyses the reaction RNA(n) + a ribonucleoside 5'-triphosphate = RNA(n+1) + diphosphate. In terms of biological role, DNA-dependent RNA polymerase catalyzes the transcription of DNA into RNA using the four ribonucleoside triphosphates as substrates. The chain is DNA-directed RNA polymerase subunit beta from Chlamydia caviae (strain ATCC VR-813 / DSM 19441 / 03DC25 / GPIC) (Chlamydophila caviae).